The primary structure comprises 484 residues: Serine/arginine-rich splicing factor 11 (484 aa).

The disordered stretch occupies residues 1 to 33 (MSNTTVVPSTAGPGPSGGPGGGGGGGGGGGGTE). Ser-2 is subject to N-acetylserine. Positions 14–32 (GPSGGPGGGGGGGGGGGGT) are enriched in gly residues. In terms of domain architecture, RRM spans 33 to 113 (EVIQVTNVSP…ALIVVPYAEG (81 aa)). Lys-197 participates in a covalent cross-link: Glycyl lysine isopeptide (Lys-Gly) (interchain with G-Cter in SUMO2). Ser-207 bears the Phosphoserine mark. Residue Lys-211 forms a Glycyl lysine isopeptide (Lys-Gly) (interchain with G-Cter in SUMO2) linkage. Ser-212 is modified (phosphoserine). Positions 233–484 (ISAAIEPDKK…HHEEDMDMSD (252 aa)) are disordered. Basic residues predominate over residues 244-308 (EKRRHSRSRS…ERGRRSRSTS (65 aa)). Repeat copies occupy residues 247 to 255 (RHSRSRSRS), 258 to 265 (RRTPSSSR), 267 to 274 (RRSRSRSR), 275 to 282 (RRSHSKSR), 285 to 292 (RRSKSPRR), 293 to 300 (RRSHSRER), 302 to 309 (RRSRSTSK), 321 to 328 (KRSKTPPK), 334 to 341 (RRSRSASR), and 346 to 353 (RRSRSGTR). Residues 247-353 (RHSRSRSRSR…RRRRSRSGTR (107 aa)) are 10 X 8 AA approximate repeats of R-R-S-R-S-R-S-R. The segment covering 309-320 (KTRDKKKEDKEK) has biased composition (basic and acidic residues). Ser-323 is subject to Phosphoserine. Thr-325 is modified (phosphothreonine). Positions 334–379 (RRSRSASRERRRRRSRSGTRSPKKPRSPKRKLSRSPSPRRHKKEKK) are enriched in basic residues. Basic and acidic residues-rich tracts occupy residues 380-395 (KDKD…ERST), 402-424 (KDKE…VTRD), and 433-478 (DSEK…HHEE). Residues Ser-414 and Ser-434 each carry the phosphoserine modification. At Thr-447 the chain carries Phosphothreonine. Phosphoserine occurs at positions 449, 456, 464, and 483.

Belongs to the splicing factor SR family. In terms of assembly, interacts with PUF60.

It is found in the nucleus. May function in pre-mRNA splicing. The protein is Serine/arginine-rich splicing factor 11 (SRSF11) of Homo sapiens (Human).